The primary structure comprises 329 residues: Isopenicillin N synthase (329 aa).

Residues Arg-87, Tyr-91, Ser-183, and Tyr-189 each contribute to the isopenicillin N site. 6 residues coordinate N-[(5S)-5-amino-5-carboxypentanoyl]-L-cysteinyl-D-valine: Arg-87, Tyr-91, Ser-183, Tyr-189, His-212, and Asp-214. The region spanning 180 to 286 is the Fe2OG dioxygenase domain; sequence TLSSVSLIRY…RLSLPFFLNA (107 aa). The Fe(2+) site is built by His-212, Asp-214, and His-268. Arg-277 contacts 2-oxoglutarate. Ser-279 is an isopenicillin N binding site. Residue Ser-279 participates in N-[(5S)-5-amino-5-carboxypentanoyl]-L-cysteinyl-D-valine binding.

The protein belongs to the iron/ascorbate-dependent oxidoreductase family. Requires Fe cation as cofactor. L-ascorbate serves as cofactor.

The enzyme catalyses N-[(5S)-5-amino-5-carboxypentanoyl]-L-cysteinyl-D-valine + O2 = isopenicillin N + 2 H2O. It participates in antibiotic biosynthesis; penicillin G biosynthesis; penicillin G from L-alpha-aminoadipate and L-cysteine and L-valine: step 2/3. Its function is as follows. Removes, in the presence of oxygen, 4 hydrogen atoms from delta-L-(alpha-aminoadipyl)-L-cysteinyl-D-valine (ACV) to form the azetidinone and thiazolidine rings of isopenicillin. The chain is Isopenicillin N synthase (pcbC) from Streptomyces jumonjinensis.